Reading from the N-terminus, the 482-residue chain is Chitobiosyldiphosphodolichol beta-mannosyltransferase (482 aa).

At 1 to 2 (MA) the chain is on the lumenal side. A helical transmembrane segment spans residues 3–23 (ASCVALLVLALLLLVLLLGLW). At 24-99 (KRGRQTGRAR…DLRGLGAGPR (76 aa)) the chain is on the cytoplasmic side. Positions 100 to 120 (ILQYGVKVVFQAVYLLWKMMR) form an intramembrane region, helical. Topologically, residues 121–482 (MDPAAYIFLQ…PCGHPSCRGF (362 aa)) are cytoplasmic. Position 242 is a phosphoserine (Ser242).

It belongs to the glycosyltransferase group 1 family. Glycosyltransferase 33 subfamily.

It localises to the endoplasmic reticulum membrane. The enzyme catalyses an N,N'-diacetylchitobiosyl-diphospho-di-trans,poly-cis-dolichol + GDP-alpha-D-mannose = a beta-D-Man-(1-&gt;4)-beta-D-GlcNAc-(1-&gt;4)-alpha-D-GlcNAc-diphospho-di-trans,poly-cis-dolichol + GDP + H(+). It functions in the pathway protein modification; protein glycosylation. Mannosyltransferase that operates in the biosynthetic pathway of dolichol-linked oligosaccharides, the glycan precursors employed in protein asparagine (N)-glycosylation. The assembly of dolichol-linked oligosaccharides begins on the cytosolic side of the endoplasmic reticulum membrane and finishes in its lumen. The sequential addition of sugars to dolichol pyrophosphate produces dolichol-linked oligosaccharides containing fourteen sugars, including two GlcNAcs, nine mannoses and three glucoses. Once assembled, the oligosaccharide is transferred from the lipid to nascent proteins by oligosaccharyltransferases. Catalyzes, on the cytoplasmic face of the endoplasmic reticulum, the addition of the first mannose residues to the dolichol-linked oligosaccharide chain, to produce Man1GlcNAc(2)-PP-dolichol core oligosaccharide. Man1GlcNAc(2)-PP-dolichol is a substrate for ALG2, the following enzyme in the biosynthetic pathway. The protein is Chitobiosyldiphosphodolichol beta-mannosyltransferase of Mus musculus (Mouse).